A 171-amino-acid polypeptide reads, in one-letter code: S-ribosylhomocysteine lyase (171 aa).

Positions 54, 58, and 128 each coordinate Fe cation.

Belongs to the LuxS family. As to quaternary structure, homodimer. Fe cation is required as a cofactor.

It catalyses the reaction S-(5-deoxy-D-ribos-5-yl)-L-homocysteine = (S)-4,5-dihydroxypentane-2,3-dione + L-homocysteine. Its function is as follows. Involved in the synthesis of autoinducer 2 (AI-2) which is secreted by bacteria and is used to communicate both the cell density and the metabolic potential of the environment. The regulation of gene expression in response to changes in cell density is called quorum sensing. Catalyzes the transformation of S-ribosylhomocysteine (RHC) to homocysteine (HC) and 4,5-dihydroxy-2,3-pentadione (DPD). This is S-ribosylhomocysteine lyase from Serratia proteamaculans (strain 568).